A 446-amino-acid polypeptide reads, in one-letter code: Tubulin beta-6 chain (446 aa).

Positions 1-4 (MREI) match the MREI motif motif. Residues Gln11, Glu69, Ser138, Gly142, Thr143, and Gly144 each coordinate GTP. A Mg(2+)-binding site is contributed by Glu69. Ser172 carries the phosphoserine; by CDK1 modification. GTP-binding residues include Asn204 and Asn226. A 5-glutamyl polyglutamate modification is found at Glu438.

It belongs to the tubulin family. Dimer of alpha and beta chains. A typical microtubule is a hollow water-filled tube with an outer diameter of 25 nm and an inner diameter of 15 nM. Alpha-beta heterodimers associate head-to-tail to form protofilaments running lengthwise along the microtubule wall with the beta-tubulin subunit facing the microtubule plus end conferring a structural polarity. Microtubules usually have 13 protofilaments but different protofilament numbers can be found in some organisms and specialized cells. Requires Mg(2+) as cofactor. In terms of processing, some glutamate residues at the C-terminus are polyglycylated, resulting in polyglycine chains on the gamma-carboxyl group. Glycylation is mainly limited to tubulin incorporated into axonemes (cilia and flagella) whereas glutamylation is prevalent in neuronal cells, centrioles, axonemes, and the mitotic spindle. Both modifications can coexist on the same protein on adjacent residues, and lowering polyglycylation levels increases polyglutamylation, and reciprocally. Cilia and flagella glycylation is required for their stability and maintenance. Flagella glycylation controls sperm motility. Post-translationally, some glutamate residues at the C-terminus are polyglutamylated, resulting in polyglutamate chains on the gamma-carboxyl group. Polyglutamylation plays a key role in microtubule severing by spastin (SPAST). SPAST preferentially recognizes and acts on microtubules decorated with short polyglutamate tails: severing activity by SPAST increases as the number of glutamates per tubulin rises from one to eight, but decreases beyond this glutamylation threshold. Glutamylation is also involved in cilia motility. Phosphorylated on Ser-172 by CDK1 during the cell cycle, from metaphase to telophase, but not in interphase. This phosphorylation inhibits tubulin incorporation into microtubules.

The protein resides in the cytoplasm. It is found in the cytoskeleton. Tubulin is the major constituent of microtubules, a cylinder consisting of laterally associated linear protofilaments composed of alpha- and beta-tubulin heterodimers. Microtubules grow by the addition of GTP-tubulin dimers to the microtubule end, where a stabilizing cap forms. Below the cap, tubulin dimers are in GDP-bound state, owing to GTPase activity of alpha-tubulin. In Bos taurus (Bovine), this protein is Tubulin beta-6 chain (TUBB6).